We begin with the raw amino-acid sequence, 91 residues long: UPF0213 protein NMC1807 (91 aa).

In terms of domain architecture, GIY-YIG spans 4 to 83 (SNWSVYLILC…AAQKRQLWEQ (80 aa)).

The protein belongs to the UPF0213 family.

In Neisseria meningitidis serogroup C / serotype 2a (strain ATCC 700532 / DSM 15464 / FAM18), this protein is UPF0213 protein NMC1807.